The following is a 268-amino-acid chain: Tryptophan synthase alpha chain (268 aa).

Catalysis depends on proton acceptor residues Glu49 and Asp60.

The protein belongs to the TrpA family. As to quaternary structure, tetramer of two alpha and two beta chains.

It catalyses the reaction (1S,2R)-1-C-(indol-3-yl)glycerol 3-phosphate + L-serine = D-glyceraldehyde 3-phosphate + L-tryptophan + H2O. It functions in the pathway amino-acid biosynthesis; L-tryptophan biosynthesis; L-tryptophan from chorismate: step 5/5. In terms of biological role, the alpha subunit is responsible for the aldol cleavage of indoleglycerol phosphate to indole and glyceraldehyde 3-phosphate. This Shigella dysenteriae serotype 1 (strain Sd197) protein is Tryptophan synthase alpha chain.